The sequence spans 228 residues: Sugar fermentation stimulation protein homolog (228 aa).

The protein belongs to the SfsA family.

The sequence is that of Sugar fermentation stimulation protein homolog from Psychromonas ingrahamii (strain DSM 17664 / CCUG 51855 / 37).